The primary structure comprises 472 residues: 3-isopropylmalate dehydratase large subunit (472 aa).

3 residues coordinate [4Fe-4S] cluster: cysteine 353, cysteine 414, and cysteine 417.

This sequence belongs to the aconitase/IPM isomerase family. LeuC type 1 subfamily. As to quaternary structure, heterodimer of LeuC and LeuD. [4Fe-4S] cluster serves as cofactor.

The catalysed reaction is (2R,3S)-3-isopropylmalate = (2S)-2-isopropylmalate. Its pathway is amino-acid biosynthesis; L-leucine biosynthesis; L-leucine from 3-methyl-2-oxobutanoate: step 2/4. Catalyzes the isomerization between 2-isopropylmalate and 3-isopropylmalate, via the formation of 2-isopropylmaleate. This chain is 3-isopropylmalate dehydratase large subunit, found in Acinetobacter baumannii (strain ACICU).